A 209-amino-acid polypeptide reads, in one-letter code: Uracil phosphoribosyltransferase (209 aa).

5-phospho-alpha-D-ribose 1-diphosphate-binding positions include Arg-79, Arg-104, and 131-139 (DPMLATGGS). Residues Ile-194 and 199-201 (GDA) each bind uracil. Asp-200 serves as a coordination point for 5-phospho-alpha-D-ribose 1-diphosphate.

This sequence belongs to the UPRTase family. It depends on Mg(2+) as a cofactor.

It catalyses the reaction UMP + diphosphate = 5-phospho-alpha-D-ribose 1-diphosphate + uracil. Its pathway is pyrimidine metabolism; UMP biosynthesis via salvage pathway; UMP from uracil: step 1/1. Allosterically activated by GTP. In terms of biological role, catalyzes the conversion of uracil and 5-phospho-alpha-D-ribose 1-diphosphate (PRPP) to UMP and diphosphate. The polypeptide is Uracil phosphoribosyltransferase (Citrifermentans bemidjiense (strain ATCC BAA-1014 / DSM 16622 / JCM 12645 / Bem) (Geobacter bemidjiensis)).